The chain runs to 550 residues: Transcription factor p65 (550 aa).

N-acetylmethionine is present on methionine 1. Residues 16 to 190 (ASGPYVEIIE…HPIFDNRAPN (175 aa)) form the RHD domain. A Glycyl lysine isopeptide (Lys-Gly) (interchain with G-Cter in SUMO3) cross-link involves residue lysine 37. Cysteine 38 is modified (cysteine persulfide; alternate). S-nitrosocysteine; alternate is present on cysteine 38. Lysine 122, lysine 123, lysine 218, and lysine 221 each carry N6-acetyllysine. Residues lysine 122 and lysine 123 each participate in a glycyl lysine isopeptide (Lys-Gly) (interchain with G-Cter in SUMO3); alternate cross-link. Threonine 254 is modified (phosphothreonine). Phosphoserine occurs at positions 276 and 281. The Nuclear localization signal motif lies at 301–304 (KRKR). Position 310 is an N6-acetyllysine; alternate (lysine 310). Lysine 310 is subject to N6-methyllysine. At serine 311 the chain carries Phosphoserine. Transcriptional activation domain regions lie at residues 342 to 388 (PKPA…APVL) and 414 to 476 (PGPP…EFQQ). Threonine 434 bears the Phosphothreonine mark. Phosphoserine is present on serine 468. At threonine 505 the chain carries Phosphothreonine. A transcriptional activation domain 2 region spans residues 520–550 (TSGLPNGLSGDEDFSSIADMDFSALLSQISS). Position 535 is a phosphoserine (serine 535). The 9aaTAD signature appears at 535-543 (SIADMDFSA).

As to quaternary structure, component of the NF-kappa-B p65-p50 complex. Component of the NF-kappa-B p65-c-Rel complex. Homodimer; component of the NF-kappa-B p65-p65 complex. Component of the NF-kappa-B p65-p52 complex. May interact with ETHE1. Binds TLE5 and TLE1. Interacts with TP53BP2. Binds to and is phosphorylated by the activated form of either RPS6KA4 or RPS6KA5. Interacts with ING4 and this interaction may be indirect. Interacts with CARM1, USP48 and UNC5CL. Interacts with IRAK1BP1. Interacts with NFKBID. Interacts with NFKBIA. Interacts with GSK3B. Interacts with NFKBIB. Interacts with NFKBIE. Interacts with NFKBIZ. Interacts with EHMT1 (via ANK repeats). Part of a 70-90 kDa complex at least consisting of CHUK, IKBKB, NFKBIA, RELA, ELP1 and MAP3K14. Interacts with HDAC3; HDAC3 mediates the deacetylation of RELA. Interacts with HDAC1; the interaction requires non-phosphorylated RELA. Interacts with CBP; the interaction requires phosphorylated RELA. Interacts (phosphorylated at 'Thr-254') with PIN1; the interaction inhibits p65 binding to NFKBIA. Interacts with SOCS1. Interacts with UXT. Interacts with MTDH and PHF11. Interacts with ARRB2. Interacts with NFKBIA (when phosphorylated), the interaction is direct; phosphorylated NFKBIA is part of a SCF(BTRC)-like complex lacking CUL1. Interacts with RNF25. Interacts (via C-terminus) with DDX1. Interacts with UFL1 and COMMD1. Interacts with BRMS1; this promotes deacetylation of 'Lys-310'. Interacts with NOTCH2. Directly interacts with MEN1; this interaction represses NFKB-mediated transactivation. Interacts with AKIP1, which promotes the phosphorylation and nuclear retention of RELA. Interacts (via the RHD) with GFI1; the interaction, after bacterial lipopolysaccharide (LPS) stimulation, inhibits the transcriptional activity by interfering with the DNA-binding activity to target gene promoter DNA. Interacts (when acetylated at Lys-310) with BRD4; leading to activation of the NF-kappa-B pathway. Interacts with MEFV. Interacts with CLOCK. Interacts (via N-terminus) with CPEN1; this interaction induces proteolytic cleavage of p65/RELA subunit and inhibition of NF-kappa-B transcriptional activity. Interacts with FOXP3. Interacts with CDK5RAP3; stimulates the interaction of RELA with HDAC1, HDAC2 and HDAC3 thereby inhibiting NF-kappa-B transcriptional activity. Interacts with DHX9; this interaction is direct and activates NF-kappa-B-mediated transcription. Interacts with LRRC25. Interacts with TBX21. Interacts with KAT2A. Interacts with ZBTB7A; involved in the control by RELA of the accessibility of target gene promoters. Directly interacts with DDX3X; this interaction may trap RELA in the cytoplasm, impairing nuclear relocalization upon TNF activating signals. Interacts with PHF2. Interacts with MKRN2; the interaction leads to its polyubiquitination and proteasome-dependent degradation. Interacts with ECSIT. Interacts with RAB28; the interaction contributes to RELA transport from cytoplasm to nucleus. In terms of processing, ubiquitinated by RNF182, leading to its proteasomal degradation. Degradation is required for termination of NF-kappa-B response. Polyubiquitinated via 'Lys-29'-linked ubiquitin; leading to lysosomal degradation. Monomethylated at Lys-310 by SETD6. Monomethylation at Lys-310 is recognized by the ANK repeats of EHMT1 and promotes the formation of repressed chromatin at target genes, leading to down-regulation of NF-kappa-B transcription factor activity. Phosphorylation at Ser-311 disrupts the interaction with EHMT1 without preventing monomethylation at Lys-310 and relieves the repression of target genes. Post-translationally, phosphorylation at Ser-311 disrupts the interaction with EHMT1 and promotes transcription factor activity. Phosphorylation on Ser-535 stimulates acetylation on Lys-310 and interaction with CBP; the phosphorylated and acetylated forms show enhanced transcriptional activity. Phosphorylation at Ser-276 by RPS6KA4 and RPS6KA5 promotes its transactivation and transcriptional activities. In terms of processing, phosphorylation at Ser-75 by herpes simplex virus 1/HHV-1 inhibits NF-kappa-B activation. Reversibly acetylated; the acetylation seems to be mediated by CBP, the deacetylation by HDAC3 and SIRT2. Acetylation at Lys-122 enhances DNA binding and impairs association with NFKBIA. Acetylation at Lys-310 is required for full transcriptional activity in the absence of effects on DNA binding and NFKBIA association. Acetylation at Lys-310 promotes interaction with BRD4. Acetylation can also lower DNA-binding and results in nuclear export. Interaction with BRMS1 promotes deacetylation of Lys-310. Lys-310 is deacetylated by SIRT2. Post-translationally, S-nitrosylation of Cys-38 inactivates the enzyme activity. In terms of processing, sulfhydration at Cys-38 mediates the anti-apoptotic activity by promoting the interaction with RPS3 and activating the transcription factor activity. Sumoylation by PIAS3 negatively regulates DNA-bound activated NF-kappa-B. Post-translationally, proteolytically cleaved within a conserved N-terminus region required for base-specific contact with DNA in a CPEN1-mediated manner, and hence inhibits NF-kappa-B transcriptional activity.

It is found in the nucleus. Its subcellular location is the cytoplasm. In terms of biological role, NF-kappa-B is a pleiotropic transcription factor present in almost all cell types and is the endpoint of a series of signal transduction events that are initiated by a vast array of stimuli related to many biological processes such as inflammation, immunity, differentiation, cell growth, tumorigenesis and apoptosis. NF-kappa-B is a homo- or heterodimeric complex formed by the Rel-like domain-containing proteins RELA/p65, RELB, NFKB1/p105, NFKB1/p50, REL and NFKB2/p52. The heterodimeric RELA-NFKB1 complex appears to be most abundant one. The dimers bind at kappa-B sites in the DNA of their target genes and the individual dimers have distinct preferences for different kappa-B sites that they can bind with distinguishable affinity and specificity. Different dimer combinations act as transcriptional activators or repressors, respectively. The NF-kappa-B heterodimeric RELA-NFKB1 and RELA-REL complexes, for instance, function as transcriptional activators. NF-kappa-B is controlled by various mechanisms of post-translational modification and subcellular compartmentalization as well as by interactions with other cofactors or corepressors. NF-kappa-B complexes are held in the cytoplasm in an inactive state complexed with members of the NF-kappa-B inhibitor (I-kappa-B) family. In a conventional activation pathway, I-kappa-B is phosphorylated by I-kappa-B kinases (IKKs) in response to different activators, subsequently degraded thus liberating the active NF-kappa-B complex which translocates to the nucleus. The inhibitory effect of I-kappa-B on NF-kappa-B through retention in the cytoplasm is exerted primarily through the interaction with RELA. RELA shows a weak DNA-binding site which could contribute directly to DNA binding in the NF-kappa-B complex. Besides its activity as a direct transcriptional activator, it is also able to modulate promoters accessibility to transcription factors and thereby indirectly regulate gene expression. Associates with chromatin at the NF-kappa-B promoter region via association with DDX1. Essential for cytokine gene expression in T-cells. The NF-kappa-B homodimeric RELA-RELA complex appears to be involved in invasin-mediated activation of IL-8 expression. Key transcription factor regulating the IFN response during SARS-CoV-2 infection. The polypeptide is Transcription factor p65 (Rattus norvegicus (Rat)).